The following is a 399-amino-acid chain: L-asparaginase-like protein GE13669 (399 aa).

An N-terminal signal peptide occupies residues methionine 1–serine 22. 3 disulfide bridges follow: cysteine 90/cysteine 95, cysteine 189/cysteine 205, and cysteine 344/cysteine 371.

The protein belongs to the Ntn-hydrolase family.

This chain is L-asparaginase-like protein GE13669, found in Drosophila yakuba (Fruit fly).